A 366-amino-acid chain; its full sequence is Ribosomal RNA large subunit methyltransferase M (366 aa).

S-adenosyl-L-methionine is bound by residues serine 188, 221 to 224 (CPGG), aspartate 240, aspartate 260, and aspartate 277. Catalysis depends on lysine 306, which acts as the Proton acceptor.

Belongs to the class I-like SAM-binding methyltransferase superfamily. RNA methyltransferase RlmE family. RlmM subfamily. As to quaternary structure, monomer.

Its subcellular location is the cytoplasm. It catalyses the reaction cytidine(2498) in 23S rRNA + S-adenosyl-L-methionine = 2'-O-methylcytidine(2498) in 23S rRNA + S-adenosyl-L-homocysteine + H(+). Its function is as follows. Catalyzes the 2'-O-methylation at nucleotide C2498 in 23S rRNA. This Erwinia tasmaniensis (strain DSM 17950 / CFBP 7177 / CIP 109463 / NCPPB 4357 / Et1/99) protein is Ribosomal RNA large subunit methyltransferase M.